The chain runs to 77 residues: Putative ankyrin repeat protein RC0956 (77 aa).

The ANK repeat unit spans residues 8–38 (TDISPLMLASEYGQVTIVKYLLKHGNYNVKG).

The sequence is that of Putative ankyrin repeat protein RC0956 from Rickettsia conorii (strain ATCC VR-613 / Malish 7).